We begin with the raw amino-acid sequence, 417 residues long: Senescence-associated protein AAF, chloroplastic (417 aa).

The transit peptide at M1–L36 directs the protein to the chloroplast.

It belongs to the ATA15/OSA15 family. As to expression, expressed in leaves. Expressed in 7-day-old seedlings, roots, rosette leaves, cauline leaves and flower buds.

It localises to the plastid. The protein resides in the chloroplast. In terms of biological role, involved in modulation of redox homeostasis to regulate leaf senescence mediated by age and stress factors during plant development. Its function is dependent of EIN2, a central factor of ethylene signaling. This Arabidopsis thaliana (Mouse-ear cress) protein is Senescence-associated protein AAF, chloroplastic.